The following is a 540-amino-acid chain: Putative cysteine ligase BshC (540 aa).

A coiled-coil region spans residues 457-477 (EKNRAFIQGQIAFLKERMERE).

This sequence belongs to the BshC family.

Involved in bacillithiol (BSH) biosynthesis. May catalyze the last step of the pathway, the addition of cysteine to glucosamine malate (GlcN-Mal) to generate BSH. This is Putative cysteine ligase BshC from Shouchella clausii (strain KSM-K16) (Alkalihalobacillus clausii).